The following is a 430-amino-acid chain: Adenylosuccinate synthetase (430 aa).

Residues 12–18 and 40–42 each bind GTP; these read GDEGKGK and GHT. D13 (proton acceptor) is an active-site residue. Mg(2+) contacts are provided by D13 and G40. IMP contacts are provided by residues 13–16, 38–41, T130, R144, Q224, T239, and R303; these read DEGK and NAGH. H41 (proton donor) is an active-site residue. A substrate-binding site is contributed by 299-305; that stretch reads TNTGRAR. Residues R305, 331 to 333, and 413 to 415 contribute to the GTP site; these read KLD and STS.

The protein belongs to the adenylosuccinate synthetase family. Homodimer. Requires Mg(2+) as cofactor.

The protein resides in the cytoplasm. The enzyme catalyses IMP + L-aspartate + GTP = N(6)-(1,2-dicarboxyethyl)-AMP + GDP + phosphate + 2 H(+). It participates in purine metabolism; AMP biosynthesis via de novo pathway; AMP from IMP: step 1/2. Its function is as follows. Plays an important role in the de novo pathway of purine nucleotide biosynthesis. Catalyzes the first committed step in the biosynthesis of AMP from IMP. This is Adenylosuccinate synthetase from Hyphomonas neptunium (strain ATCC 15444).